A 234-amino-acid chain; its full sequence is Sugar fermentation stimulation protein homolog (234 aa).

The protein belongs to the SfsA family.

The polypeptide is Sugar fermentation stimulation protein homolog (Shewanella frigidimarina (strain NCIMB 400)).